Here is a 438-residue protein sequence, read N- to C-terminus: Trigger factor (438 aa).

The PPIase FKBP-type domain maps to 163–248 (GDTAIIDFAG…VKEIKRKEIA (86 aa)).

It belongs to the FKBP-type PPIase family. Tig subfamily.

It is found in the cytoplasm. The enzyme catalyses [protein]-peptidylproline (omega=180) = [protein]-peptidylproline (omega=0). Functionally, involved in protein export. Acts as a chaperone by maintaining the newly synthesized protein in an open conformation. Functions as a peptidyl-prolyl cis-trans isomerase. The chain is Trigger factor from Pelotomaculum thermopropionicum (strain DSM 13744 / JCM 10971 / SI).